A 334-amino-acid polypeptide reads, in one-letter code: D-fructose 1,6-bisphosphatase class 2/sedoheptulose 1,7-bisphosphatase (334 aa).

Residues aspartate 33, glutamate 57, aspartate 85, and glutamate 88 each coordinate Mn(2+). Substrate-binding positions include 88–90, tyrosine 119, 164–166, and 186–188; these read EGT, RAR, and DGD. Glutamate 213 contributes to the Mn(2+) binding site.

This sequence belongs to the FBPase class 2 family. In terms of assembly, homotetramer. The cofactor is Mn(2+).

It catalyses the reaction beta-D-fructose 1,6-bisphosphate + H2O = beta-D-fructose 6-phosphate + phosphate. It carries out the reaction D-sedoheptulose 1,7-bisphosphate + H2O = D-sedoheptulose 7-phosphate + phosphate. It functions in the pathway carbohydrate biosynthesis; Calvin cycle. Its function is as follows. Catalyzes the hydrolysis of fructose 1,6-bisphosphate (Fru 1,6-P2) and sedoheptulose 1,7-bisphosphate (Sed 1,7-P2) to fructose 6-phosphate and sedoheptulose 7-phosphate, respectively. This is D-fructose 1,6-bisphosphatase class 2/sedoheptulose 1,7-bisphosphatase from Synechococcus sp. (strain RCC307).